Consider the following 533-residue polypeptide: Retinoid isomerohydrolase (533 aa).

Ser2 carries the post-translational modification N-acetylserine. Residues Thr101 and Thr105 each carry the phosphothreonine modification. The S-palmitoyl cysteine; in membrane form moiety is linked to residue Cys112. An N6-acetyllysine modification is found at Lys113. Ser117 is subject to Phosphoserine. Residue His180 participates in Fe cation binding. Cys231 is lipidated: S-palmitoyl cysteine; in membrane form. Fe cation-binding residues include His241 and His313. 2 S-palmitoyl cysteine; in membrane form lipidation sites follow: Cys329 and Cys330. Residue His527 coordinates Fe cation.

This sequence belongs to the carotenoid oxygenase family. As to quaternary structure, interacts with MYO7A; this mediates light-dependent intracellular transport of RPE65. It depends on Fe(2+) as a cofactor. In terms of processing, palmitoylation by LRAT regulates ligand binding specificity; the palmitoylated form (membrane form) specifically binds all-trans-retinyl-palmitate, while the soluble unpalmitoylated form binds all-trans-retinol (vitamin A). Retinal pigment epithelium specific.

Its subcellular location is the cytoplasm. The protein localises to the cell membrane. The protein resides in the microsome membrane. The enzyme catalyses an all-trans-retinyl ester + H2O = 11-cis-retinol + a fatty acid + H(+). It catalyses the reaction lutein = (3R,3'S)-zeaxanthin. It carries out the reaction all-trans-retinyl hexadecanoate + H2O = 11-cis-retinol + hexadecanoate + H(+). Critical isomerohydrolase in the retinoid cycle involved in regeneration of 11-cis-retinal, the chromophore of rod and cone opsins. Catalyzes the cleavage and isomerization of all-trans-retinyl fatty acid esters to 11-cis-retinol which is further oxidized by 11-cis retinol dehydrogenase to 11-cis-retinal for use as visual chromophore. Essential for the production of 11-cis retinal for both rod and cone photoreceptors. Also capable of catalyzing the isomerization of lutein to meso-zeaxanthin an eye-specific carotenoid. The soluble form binds vitamin A (all-trans-retinol), making it available for LRAT processing to all-trans-retinyl ester. The membrane form, palmitoylated by LRAT, binds all-trans-retinyl esters, making them available for IMH (isomerohydrolase) processing to all-cis-retinol. The soluble form is regenerated by transferring its palmitoyl groups onto 11-cis-retinol, a reaction catalyzed by LRAT. This is Retinoid isomerohydrolase (RPE65) from Bos taurus (Bovine).